Reading from the N-terminus, the 444-residue chain is Orexin receptor type 2 (444 aa).

The span at 1 to 10 (MSGTKLEDSP) shows a compositional bias: basic and acidic residues. A disordered region spans residues 1–20 (MSGTKLEDSPPCRNWSSASE). Residues 1 to 54 (MSGTKLEDSPPCRNWSSASELNETQEPFLNPTDYDDEEFLRYLWREYLHPKEYE) are Extracellular-facing. Asn-14 and Asn-22 each carry an N-linked (GlcNAc...) asparagine glycan. The interval 33–49 (DYDDEEFLRYLWREYLH) is required for response to orexin-A. Residues 55 to 75 (WVLIAGYIIVFVVALIGNVLV) traverse the membrane as a helical segment. Topologically, residues 76–88 (CVAVWKNHHMRTV) are cytoplasmic. The helical transmembrane segment at 89-110 (TNYFIVNLSLADVLVTITCLPA) threads the bilayer. Topologically, residues 111 to 127 (TLVVDITETWFFGQSLC) are extracellular. Cysteines 127 and 210 form a disulfide. A helical membrane pass occupies residues 128–150 (KVIPYLQTVSVSVSVLTLSCIAL). The Cytoplasmic segment spans residues 151-170 (DRWYAICHPLMFKSTAKRAR). The helical transmembrane segment at 171 to 191 (NSIVIIWIVSCIIMIPQAIVM) threads the bilayer. The Extracellular portion of the chain corresponds to 192–222 (ECSTVFPGLANKTTLFTVCDERWGGEIYPKM). Asn-202 carries N-linked (GlcNAc...) asparagine glycosylation. Residues 223–243 (YHICFFLVTYMAPLCLMVLAY) form a helical membrane-spanning segment. Residues 244 to 304 (LQIFRKLWCR…QIRARRKTAR (61 aa)) lie on the Cytoplasmic side of the membrane. A helical membrane pass occupies residues 305 to 326 (MLMIVLLVFAICYLPISILNVL). Asn-324 provides a ligand contact to suvorexant. The Extracellular segment spans residues 327 to 342 (KRVFGMFAHTEDRETV). The chain crosses the membrane as a helical span at residues 343-366 (YAWFTFSHWLVYANSAANPIIYNF). At 367 to 444 (LSGKFREEFK…ANGAGPLQNW (78 aa)) the chain is on the cytoplasmic side.

Belongs to the G-protein coupled receptor 1 family.

It is found in the cell membrane. Its function is as follows. Nonselective, high-affinity receptor for both orexin-A and orexin-B neuropeptides. Triggers an increase in cytoplasmic Ca(2+) levels in response to orexin-A binding. This is Orexin receptor type 2 (HCRTR2) from Homo sapiens (Human).